The primary structure comprises 745 residues: AMP deaminase 1 (745 aa).

Phosphothreonine is present on Thr79. Ser83 is subject to Phosphoserine. Tyr214 bears the Phosphotyrosine mark. Residues His301 and His303 each coordinate Zn(2+). Substrate-binding positions include His303 and 372–377 (KFNDKY). At Ser439 the chain carries Phosphoserine. A Zn(2+)-binding site is contributed by His570. A substrate-binding site is contributed by Glu573. Catalysis depends on His592, which acts as the Proton acceptor. Asp647 contacts Zn(2+). Substrate is bound at residue 648-651 (DPMQ).

Belongs to the metallo-dependent hydrolases superfamily. Adenosine and AMP deaminases family. In terms of assembly, homotetramer. Requires Zn(2+) as cofactor.

The catalysed reaction is AMP + H2O + H(+) = IMP + NH4(+). It participates in purine metabolism; IMP biosynthesis via salvage pathway; IMP from AMP: step 1/1. In terms of biological role, AMP deaminase plays a critical role in energy metabolism. This is AMP deaminase 1 from Mus musculus (Mouse).